Here is a 221-residue protein sequence, read N- to C-terminus: Transmembrane emp24 domain-containing protein 3 (221 aa).

Positions 1-30 are cleaved as a signal peptide; sequence MGNEVPRASSFQMLMLLLLLLLLRAERLRG. At 31 to 184 the chain is on the lumenal side; the sequence is AELTFELPDN…RAEDLNSRVS (154 aa). Positions 42-124 constitute a GOLD domain; the sequence is KQCFHEEVEQ…HKTVYFDFQV (83 aa). Position 103 is a dimethylated arginine (Arg103). The chain crosses the membrane as a helical span at residues 185–205; the sequence is YWSVGETIALFVVSFSQVLLL. At 206-221 the chain is on the cytoplasmic side; the sequence is KSFFTEKRPINRAVHS. The COPII vesicle coat-binding signature appears at 208 to 209; sequence FF. Positions 208 to 221 match the COPI vesicle coat-binding motif; that stretch reads FFTEKRPINRAVHS.

This sequence belongs to the EMP24/GP25L family. In terms of assembly, monomer in endoplasmic reticulum, endoplasmic reticulum-Golgi intermediate compartment and cis-Golgi network. Interacts (via C-terminus) with COPG1; the interaction involves dimeric TMED3; however, there are conflicting reports on the interaction. Interacts with GORASP1 and GORASP2.

Its subcellular location is the endoplasmic reticulum-Golgi intermediate compartment membrane. The protein localises to the golgi apparatus. It is found in the cis-Golgi network membrane. It localises to the golgi stack membrane. The protein resides in the endoplasmic reticulum membrane. Its subcellular location is the cytoplasmic vesicle. The protein localises to the COPI-coated vesicle membrane. Its function is as follows. Potential role in vesicular protein trafficking, mainly in the early secretory pathway. Contributes to the coupled localization of TMED2 and TMED10 in the cis-Golgi network. This chain is Transmembrane emp24 domain-containing protein 3 (Tmed3), found in Rattus norvegicus (Rat).